The primary structure comprises 459 residues: U-box domain-containing protein 75 (459 aa).

A U-box domain is found at 64-138 (AVPAVFICPI…AAWFSRRYTR (75 aa)). ARM repeat units follow at residues 188-229 (QSVT…GVPL) and 231-270 (ADAK…ILME).

As to quaternary structure, interacts with GPA1. Expressed highly in panicles at flowering time, at moderate levels in vegetative shoot apices, leaf sheaths, leaf blades, and elongating internodes, and at low levels in roots.

It is found in the cell membrane. The enzyme catalyses S-ubiquitinyl-[E2 ubiquitin-conjugating enzyme]-L-cysteine + [acceptor protein]-L-lysine = [E2 ubiquitin-conjugating enzyme]-L-cysteine + N(6)-ubiquitinyl-[acceptor protein]-L-lysine.. It functions in the pathway protein modification; protein ubiquitination. In terms of biological role, E3 ubiquitin ligase that may function as positive regulator of brassinosteroid (BR) signaling. Possesses E3 ubiquitin ligase in vitro. Acts together with the heterotrimeric G alpha subunit GPA1 at the plasma membrane to mediate a BR signaling pathway that affects plant growth and development. Does not seem to be involved in gibberellin or cytokinin responses. This Oryza sativa subsp. japonica (Rice) protein is U-box domain-containing protein 75.